Consider the following 150-residue polypeptide: Transcription antitermination protein NusB (150 aa).

Belongs to the NusB family.

Its function is as follows. Involved in transcription antitermination. Required for transcription of ribosomal RNA (rRNA) genes. Binds specifically to the boxA antiterminator sequence of the ribosomal RNA (rrn) operons. The protein is Transcription antitermination protein NusB of Streptococcus pyogenes serotype M1.